A 697-amino-acid chain; its full sequence is Polyribonucleotide nucleotidyltransferase (697 aa).

Positions 488 and 494 each coordinate Mg(2+). The region spanning 555–614 is the KH domain; the sequence is PTFEVITINPDKIRDVIGKGGATIRQITEETKAAIDIEDNGTVRVFGETKAAAKAAIAKI. The S1 motif domain maps to 624–692; sequence GKIYDGKVIR…NRGRIKLTMK (69 aa).

It belongs to the polyribonucleotide nucleotidyltransferase family. Component of the RNA degradosome, which is a multiprotein complex involved in RNA processing and mRNA degradation. Mg(2+) is required as a cofactor.

The protein resides in the cytoplasm. The enzyme catalyses RNA(n+1) + phosphate = RNA(n) + a ribonucleoside 5'-diphosphate. Its function is as follows. Involved in mRNA degradation. Catalyzes the phosphorolysis of single-stranded polyribonucleotides processively in the 3'- to 5'-direction. The sequence is that of Polyribonucleotide nucleotidyltransferase from Acinetobacter baumannii (strain AB307-0294).